Here is a 308-residue protein sequence, read N- to C-terminus: Ectoine dioxygenase (308 aa).

L-ectoine is bound at residue glutamine 131. Position 137 (lysine 137) interacts with 2-oxoglutarate. 3 residues coordinate Fe cation: histidine 148, aspartate 150, and histidine 249.

Belongs to the PhyH family. EctD subfamily. As to quaternary structure, homodimer. Fe(2+) serves as cofactor.

The enzyme catalyses L-ectoine + 2-oxoglutarate + O2 = 5-hydroxyectoine + succinate + CO2. Its function is as follows. Involved in the biosynthesis of 5-hydroxyectoine, called compatible solute, which helps organisms to survive extreme osmotic stress by acting as a highly soluble organic osmolyte. Catalyzes the 2-oxoglutarate-dependent selective hydroxylation of L-ectoine to yield (4S,5S)-5-hydroxyectoine. This is Ectoine dioxygenase from Bordetella parapertussis (strain 12822 / ATCC BAA-587 / NCTC 13253).